A 97-amino-acid polypeptide reads, in one-letter code: DNA-directed RNA polymerase subunit omega (97 aa).

It belongs to the RNA polymerase subunit omega family. As to quaternary structure, the RNAP catalytic core consists of 2 alpha, 1 beta, 1 beta' and 1 omega subunit. When a sigma factor is associated with the core the holoenzyme is formed, which can initiate transcription.

The catalysed reaction is RNA(n) + a ribonucleoside 5'-triphosphate = RNA(n+1) + diphosphate. Promotes RNA polymerase assembly. Latches the N- and C-terminal regions of the beta' subunit thereby facilitating its interaction with the beta and alpha subunits. The sequence is that of DNA-directed RNA polymerase subunit omega from Corynebacterium glutamicum (strain ATCC 13032 / DSM 20300 / JCM 1318 / BCRC 11384 / CCUG 27702 / LMG 3730 / NBRC 12168 / NCIMB 10025 / NRRL B-2784 / 534).